Consider the following 72-residue polypeptide: Lantibiotic Flvbeta.g (72 aa).

Residues Met-1–Ala-34 constitute a propeptide, cleaved by FlvT. A cross-link (lanthionine (Ser-Cys); by FlvM2) is located at residues Ser-36–Cys-40. A 2,3-didehydrobutyrine; by FlvM2 mark is found at Thr-37, Thr-46, and Thr-48. 3 consecutive cross-links (beta-methyllanthionine (Thr-Cys); by FlvM2) follow at residues Thr-55–Cys-61, Thr-63–Cys-66, and Thr-67–Cys-70.

Post-translationally, contains LL-lanthionine and DL-beta-methyllanthionine, when coepressed in E.coli with the flavecin synthetase FlvM2.

Its subcellular location is the secreted. Functionally, lanthionine-containing peptide antibiotic (lantibiotic) that is probably weakly active on Gram-positive bacteria, since its analog [Del1]Flvbeta.g shows weak antibacterial activity against M.luteus. This activity is synergistically enhanced by [Del2]Flvalpha.a, an analog of Flvalpha.a, which is encoded by the same operon than Flvbeta.g. The bactericidal activity of lantibiotics is based on depolarization of energized bacterial cytoplasmic membranes, initiated by the formation of aqueous transmembrane pores. The sequence is that of Lantibiotic Flvbeta.g from Ruminococcus flavefaciens.